The following is a 476-amino-acid chain: ATP synthase subunit beta (476 aa).

162 to 169 (GGAGVGKT) is an ATP binding site.

Belongs to the ATPase alpha/beta chains family. F-type ATPases have 2 components, CF(1) - the catalytic core - and CF(0) - the membrane proton channel. CF(1) has five subunits: alpha(3), beta(3), gamma(1), delta(1), epsilon(1). CF(0) has three main subunits: a(1), b(2) and c(9-12). The alpha and beta chains form an alternating ring which encloses part of the gamma chain. CF(1) is attached to CF(0) by a central stalk formed by the gamma and epsilon chains, while a peripheral stalk is formed by the delta and b chains.

It is found in the cell membrane. It catalyses the reaction ATP + H2O + 4 H(+)(in) = ADP + phosphate + 5 H(+)(out). Produces ATP from ADP in the presence of a proton gradient across the membrane. The catalytic sites are hosted primarily by the beta subunits. This Mycoplasma capricolum subsp. capricolum (strain California kid / ATCC 27343 / NCTC 10154) protein is ATP synthase subunit beta.